Here is an 899-residue protein sequence, read N- to C-terminus: Tubulin glycylase 3F (899 aa).

Positions 471–835 (FKDVIQIIKN…TEYYQIQNWK (365 aa)) constitute a TTL domain. ATP is bound by residues 642–645 (QKYI), Lys663, and Asp665.

It is found in the cytoplasm. Its subcellular location is the cytoskeleton. The protein resides in the cilium basal body. Probable glycylase which modifies tubulin, generating side chains of glycine on the gamma-carboxyl groups of specific glutamate residues within the C-terminal tail of tubulin. This chain is Tubulin glycylase 3F (TTLL3F), found in Tetrahymena thermophila (strain SB210).